Reading from the N-terminus, the 661-residue chain is UvrABC system protein B (661 aa).

One can recognise a Helicase ATP-binding domain in the interval 25–182 (KGLNNKKRSQ…NDLVNLQYER (158 aa)). 38–45 (GITGSGKT) provides a ligand contact to ATP. The Beta-hairpin signature appears at 91–114 (YYDYYQPEAYIPKTDVFIEKDSSI). Residues 430-592 (QVEDLVGEIQ…IIPKTINRTI (163 aa)) form the Helicase C-terminal domain. The UVR domain occupies 621-656 (KAHIDKLRKEMLKAASNLEFEQAAKLRDQLKTLEEA).

It belongs to the UvrB family. In terms of assembly, forms a heterotetramer with UvrA during the search for lesions. Interacts with UvrC in an incision complex.

It is found in the cytoplasm. Its function is as follows. The UvrABC repair system catalyzes the recognition and processing of DNA lesions. A damage recognition complex composed of 2 UvrA and 2 UvrB subunits scans DNA for abnormalities. Upon binding of the UvrA(2)B(2) complex to a putative damaged site, the DNA wraps around one UvrB monomer. DNA wrap is dependent on ATP binding by UvrB and probably causes local melting of the DNA helix, facilitating insertion of UvrB beta-hairpin between the DNA strands. Then UvrB probes one DNA strand for the presence of a lesion. If a lesion is found the UvrA subunits dissociate and the UvrB-DNA preincision complex is formed. This complex is subsequently bound by UvrC and the second UvrB is released. If no lesion is found, the DNA wraps around the other UvrB subunit that will check the other stand for damage. The chain is UvrABC system protein B from Rickettsia bellii (strain RML369-C).